The following is a 234-amino-acid chain: MADRGYSFSLTTFSPSGKLVQIEYALAAVAAGAPSVGIKASNGVVLATEKKQKSILYDEQSVHKIEPITKHIGMVYSGMGPDYRVLVRRARKLAQQYFLVYQEPIPTGQLVQRVASVMQEYTQSGGVRPFGVSLLIAGWDEDRPYLFQSDPSGAYFAWKATAMGKSYVNGKTFLEKRYNEDLELEDAIHTAILTLKESFEGQMTEENIEVGICNEAGFRRLSPAEVKDYLAAIA.

Position 2 is an N-acetylalanine (Ala-2). Phosphotyrosine is present on Tyr-121.

It belongs to the peptidase T1A family. In terms of assembly, the 26S proteasome consists of a 20S proteasome core and two 19S regulatory subunits. The 20S proteasome core is composed of 28 subunits that are arranged in four stacked rings, resulting in a barrel-shaped structure. The two end rings are each formed by seven alpha subunits, and the two central rings are each formed by seven beta subunits. The catalytic chamber with the active sites is on the inside of the barrel.

The protein resides in the cytoplasm. It localises to the nucleus. In terms of biological role, the proteasome is a multicatalytic proteinase complex which is characterized by its ability to cleave peptides with Arg, Phe, Tyr, Leu, and Glu adjacent to the leaving group at neutral or slightly basic pH. The proteasome has an ATP-dependent proteolytic activity. PSMA2 may have a potential regulatory effect on another component(s) of the proteasome complex through tyrosine phosphorylation. This chain is Proteasome subunit alpha type-2 (psma2), found in Carassius auratus (Goldfish).